The following is a 289-amino-acid chain: 4-diphosphocytidyl-2-C-methyl-D-erythritol kinase (289 aa).

Lys-11 is a catalytic residue. Pro-95–Ser-105 is a binding site for ATP. Asp-137 is a catalytic residue.

This sequence belongs to the GHMP kinase family. IspE subfamily.

The catalysed reaction is 4-CDP-2-C-methyl-D-erythritol + ATP = 4-CDP-2-C-methyl-D-erythritol 2-phosphate + ADP + H(+). The protein operates within isoprenoid biosynthesis; isopentenyl diphosphate biosynthesis via DXP pathway; isopentenyl diphosphate from 1-deoxy-D-xylulose 5-phosphate: step 3/6. Its function is as follows. Catalyzes the phosphorylation of the position 2 hydroxy group of 4-diphosphocytidyl-2C-methyl-D-erythritol. The polypeptide is 4-diphosphocytidyl-2-C-methyl-D-erythritol kinase (Aeromonas salmonicida (strain A449)).